A 490-amino-acid chain; its full sequence is Betaine aldehyde dehydrogenase (490 aa).

Residues Thr26, Ile27, and Asp93 each contribute to the K(+) site. 150-152 (GAW) contributes to the NAD(+) binding site. Lys162 (charge relay system) is an active-site residue. 176 to 179 (KPSE) is a binding site for NAD(+). Val180 is a K(+) binding site. 230-233 (GVAS) lines the NAD(+) pocket. Leu246 contributes to the K(+) binding site. Residue Glu252 is the Proton acceptor of the active site. Residues Gly254, Cys286, and Glu387 each contribute to the NAD(+) site. Cys286 functions as the Nucleophile in the catalytic mechanism. Residue Cys286 is modified to Cysteine sulfenic acid (-SOH). The K(+) site is built by Lys457 and Gly460. The active-site Charge relay system is the Glu464.

This sequence belongs to the aldehyde dehydrogenase family. Dimer of dimers. The cofactor is K(+).

The enzyme catalyses betaine aldehyde + NAD(+) + H2O = glycine betaine + NADH + 2 H(+). It functions in the pathway amine and polyamine biosynthesis; betaine biosynthesis via choline pathway; betaine from betaine aldehyde: step 1/1. Functionally, involved in the biosynthesis of the osmoprotectant glycine betaine. Catalyzes the irreversible oxidation of betaine aldehyde to the corresponding acid. In Escherichia coli O6:H1 (strain CFT073 / ATCC 700928 / UPEC), this protein is Betaine aldehyde dehydrogenase.